Reading from the N-terminus, the 198-residue chain is Holliday junction branch migration complex subunit RuvA (198 aa).

The domain I stretch occupies residues Met-1–His-63. The segment at Thr-64–Lys-142 is domain II. Residues Ala-143 to Lys-147 are flexible linker. Residues Ala-148–Gly-198 are domain III.

Belongs to the RuvA family. As to quaternary structure, homotetramer. Forms an RuvA(8)-RuvB(12)-Holliday junction (HJ) complex. HJ DNA is sandwiched between 2 RuvA tetramers; dsDNA enters through RuvA and exits via RuvB. An RuvB hexamer assembles on each DNA strand where it exits the tetramer. Each RuvB hexamer is contacted by two RuvA subunits (via domain III) on 2 adjacent RuvB subunits; this complex drives branch migration. In the full resolvosome a probable DNA-RuvA(4)-RuvB(12)-RuvC(2) complex forms which resolves the HJ.

It localises to the cytoplasm. Its function is as follows. The RuvA-RuvB-RuvC complex processes Holliday junction (HJ) DNA during genetic recombination and DNA repair, while the RuvA-RuvB complex plays an important role in the rescue of blocked DNA replication forks via replication fork reversal (RFR). RuvA specifically binds to HJ cruciform DNA, conferring on it an open structure. The RuvB hexamer acts as an ATP-dependent pump, pulling dsDNA into and through the RuvAB complex. HJ branch migration allows RuvC to scan DNA until it finds its consensus sequence, where it cleaves and resolves the cruciform DNA. This is Holliday junction branch migration complex subunit RuvA from Streptococcus pyogenes serotype M2 (strain MGAS10270).